The chain runs to 848 residues: MENQNTKKPLVNVKALSMMFKVRGTLFKALDEIGFTVNEGDFFGVIGESGSGKSTTGKCLIRLNIPSGGKIEIANHLLSGKKLTKENNQWLKQNIQMVFQDPYSSINPTKNVLTVISEPLVISKTVFGETKQYLKSLQKLSFKVKKTLLRNDIELETKFHNNFFKTVIKQINESLFNFEDLDYKDLKPSHLRQRIINETDKFIEKIRSEFALFYDFYANQSVPLQKALDDANSSLTPSSVIELKNQLKALQKQAKISKAAWDILQALKQNQKELKDYENYVHFELQKKPRIYLNTWLLTTKSYIKDSKQNMQLTDDIFAFSYNSMVDKKRNLVLILSKYYKLLPYFYDQSVFDNADQFDEIANLIFFDLVETLLGVTSLFNDALAADKVPLIKFAKFLNKLCDLRFLTLKKSFKKTRVSCSFSFNSEPEILFANSCYDLQQMPQIIKPFWEKLFNEQNYQKIIDSVSRLNVMIANYITKAFEIKKTIDEKLREFKQQNLALKKAYSANKKSEANKASINELKVNLKTLKKQLKQEKNTTKKQSKKELKPLLKEHHTALKLHDEFNHDLRKWFKKLNFMVKKYNRLENSQKKFCLVKKLKALFKKQDETLQSELRPKLKTFGVINFEYKRAVKESNVFRLVHFAKNIFKPFLFFNLTKIFMRNKVYEALDSVGLKREHAYRYPHEFSGGQRQRIAIARALITKPKLIIADELISALDVSIQAQVINILKDLAKKHNLTVLFIAHDLSMVQTVCNRLIIMHRGKIVERGSVDEIFSNPVHPYTRSLIKASPKLSKINVDLASFDENFTYDSDYSLTNMPFYIKVPNSEEHELYCTQKQFDSWIKEATPIN.

Positions 13–785 (VKALSMMFKV…PVHPYTRSLI (773 aa)) constitute an ABC transporter domain. 47 to 54 (GESGSGKS) contributes to the ATP binding site.

Belongs to the ABC transporter superfamily. As to quaternary structure, the complex is composed of two ATP-binding proteins (OppD and OppF), two transmembrane proteins (OppB and OppC) and a solute-binding protein (OppA).

It localises to the cell membrane. The catalysed reaction is a [peptide](out) + ATP + H2O = a [peptide](in) + ADP + phosphate + H(+). Functionally, part of the ABC transporter complex OppABCDF involved in the uptake of oligopeptides. Probably responsible for energy coupling to the transport system. The sequence is that of Oligopeptide transport ATP-binding protein OppF (oppF) from Mycoplasma genitalium (strain ATCC 33530 / DSM 19775 / NCTC 10195 / G37) (Mycoplasmoides genitalium).